A 492-amino-acid polypeptide reads, in one-letter code: Amphoterin-induced protein 1 (492 aa).

Positions 1-27 are cleaved as a signal peptide; the sequence is MQPQRDLRGLWLLLLSVFLLLFEVARA. One can recognise an LRRNT domain in the interval 28 to 61; the sequence is GRSVVSCPANCLCASNILSCSKQQLPNVPQSLPS. Topologically, residues 28–371 are extracellular; it reads GRSVVSCPAN…LHGHHDTLNT (344 aa). 2 disulfide bridges follow: Cys34/Cys40 and Cys38/Cys47. LRR repeat units follow at residues 62 to 83, 87 to 108, 111 to 132, 135 to 156, 159 to 180, and 186 to 206; these read YTAL…WTPT, NLHS…AFVP, NLRY…LFSD, ALEV…AFED, QLQK…LIKD, and KLML…TDLQ. A glycan (N-linked (GlcNAc...) asparagine) is linked at Asn72. Positions 208–272 constitute an LRRCT domain; sequence LPAWVKNGLY…FSLDFFNCSE (65 aa). Intrachain disulfides connect Cys225/Cys253, Cys227/Cys270, and Cys290/Cys340. Asn269, Asn315, Asn348, and Asn359 each carry an N-linked (GlcNAc...) asparagine glycan. One can recognise an Ig-like C2-type domain in the interval 269-352; the sequence is NCSEYKESAW…MGETFNETLS (84 aa). The chain crosses the membrane as a helical span at residues 372–392; that stretch reads AYTTLVGCILSVVLVLIYLYL. The Cytoplasmic portion of the chain corresponds to 393–492; the sequence is TPCRCWCRGV…SVFSDTPIVV (100 aa). Residues 404–492 form a disordered region; sequence KPSSHQGDSL…SVFSDTPIVV (89 aa). Polar residues predominate over residues 407 to 423; the sequence is SHQGDSLSSSMLSTTPN. The span at 430–441 shows a compositional bias: basic and acidic residues; the sequence is GDKDDGFDRRVA. Phosphoserine is present on residues Ser476 and Ser480.

This sequence belongs to the immunoglobulin superfamily. AMIGO family. Homodimer, and heterodimer with AMIGO2 and AMIGO3. Interacts with KCNB1. In terms of tissue distribution, expressed in hippocampal and cortical neurons (at protein level). High levels in cerebellum, cerebrum, and retina. Low levels in liver, kidney, small intestine, spleen, lung and heart.

The protein localises to the cell membrane. It localises to the perikaryon. Its subcellular location is the cell projection. It is found in the dendrite. Its function is as follows. Promotes growth and fasciculation of neurites from cultured hippocampal neurons. May be involved in fasciculation as well as myelination of developing neural axons. May have a role in regeneration as well as neural plasticity in the adult nervous system. May mediate homophilic as well as heterophilic cell-cell interaction and contribute to signal transduction through its intracellular domain. Assembled with KCNB1 modulates the gating characteristics of the delayed rectifier voltage-dependent potassium channel KCNB1. This chain is Amphoterin-induced protein 1, found in Mus musculus (Mouse).